We begin with the raw amino-acid sequence, 238 residues long: Small ribosomal subunit protein uS3 (238 aa).

Residues 39–108 enclose the KH type-2 domain; the sequence is IRKFVKKKLF…NVAVNVIEVK (70 aa).

Belongs to the universal ribosomal protein uS3 family. In terms of assembly, part of the 30S ribosomal subunit. Forms a tight complex with proteins S10 and S14.

Functionally, binds the lower part of the 30S subunit head. Binds mRNA in the 70S ribosome, positioning it for translation. This is Small ribosomal subunit protein uS3 from Alkaliphilus oremlandii (strain OhILAs) (Clostridium oremlandii (strain OhILAs)).